The sequence spans 7603 residues: Cysteine repeat modular protein B (7603 aa).

N-linked (GlcNAc...) asparagine glycosylation is present at Asn172. A helical membrane pass occupies residues 223 to 243 (LVGFFLVPVFVVFFVLSSDAT). 2 disordered regions span residues 248-275 (GVGV…SSPG) and 291-323 (RDTK…GKGF). Positions 263-275 (SVSSSSRASSSPG) are enriched in low complexity. Residues 302–313 (SSRRSARARRRR) show a composition bias toward basic residues. 6 N-linked (GlcNAc...) asparagine glycosylation sites follow: Asn329, Asn589, Asn848, Asn1128, Asn1183, and Asn1402. Residues 1554–1574 (VLRSRSGPSHPSSVSQPSPSF) are disordered. Residues 1557-1573 (SRSGPSHPSSVSQPSPS) show a composition bias toward low complexity. Residues Asn1622, Asn2578, Asn2664, Asn3094, and Asn3126 are each glycosylated (N-linked (GlcNAc...) asparagine). Positions 3316–3445 (SNAVPEADEN…SDLTTSQPED (130 aa)) are disordered. Acidic residues predominate over residues 3321–3340 (EADENQVESAEPEQNAEGET). A compositionally biased stretch (low complexity) spans 3342–3360 (EQGAEEAGGNAAEPGAESG). N-linked (GlcNAc...) asparagine glycosylation is found at Asn3546, Asn4367, Asn4823, Asn4901, Asn5186, Asn5546, and Asn5666. The disordered stretch occupies residues 5758–5799 (LAESRSDDGTVGDDVDLDDNALSGTTNSGWTTSSSNSERVRK). The span at 5767–5776 (TVGDDVDLDD) shows a compositional bias: acidic residues. Low complexity predominate over residues 5780–5794 (SGTTNSGWTTSSSNS). Asn5806, Asn5876, Asn5998, Asn6055, and Asn6369 each carry an N-linked (GlcNAc...) asparagine glycan. Residues 6043-6115 (GEADHTPADG…EASEAESVSA (73 aa)) are disordered. Polar residues predominate over residues 6051 to 6060 (DGSSNSSEDS). The span at 6391–6405 (EFTDTGPAPDDHTDE) shows a compositional bias: basic and acidic residues. The tract at residues 6391–6436 (EFTDTGPAPDDHTDEGGANLDSTGGSGEPSSSAPVDPSGENEGQLL) is disordered. Polar residues predominate over residues 6410–6423 (LDSTGGSGEPSSSA). N-linked (GlcNAc...) asparagine glycosylation occurs at Asn6453. 8 consecutive transmembrane segments (helical) span residues 6520-6540 (IFIL…ALTI), 6552-6572 (VLIR…LMPA), 6578-6598 (LAGW…ALHP), 6627-6647 (IFVP…CVAT), 6770-6790 (LILG…GFVA), 6831-6851 (CVAL…QEIF), 6888-6908 (GLMV…FEVF), and 6912-6932 (GAIP…SLFV). N-linked (GlcNAc...) asparagine glycosylation is present at Asn7013. Residues 7017 to 7037 (FVAALSDSLSQLVIAWCQFTI) form a helical membrane-spanning segment. Residue Asn7061 is glycosylated (N-linked (GlcNAc...) asparagine). Positions 7174-7242 (APQLRKENHA…RGLIESEIDD (69 aa)) form a coiled coil. A disordered region spans residues 7379 to 7603 (AAPAAGLRSH…LKKPGSPKQE (225 aa)). The span at 7408–7417 (LGTNLSTPSA) shows a compositional bias: polar residues. N-linked (GlcNAc...) asparagine glycosylation is present at Asn7411. Composition is skewed to low complexity over residues 7474-7496 (PTPS…SVTP), 7509-7541 (SEAP…SSDL), and 7560-7582 (GEAA…AAQP).

As to quaternary structure, component of a complex, at least composed of cysteine repeat modular protein A (CRMPa), cysteine repeat modular protein B (CRMPb), micronemal protein 15 (MIC15) and thrombospondin type 1 domain-containing protein (TSP1).

The protein localises to the cell membrane. The protein resides in the endoplasmic reticulum. Its subcellular location is the golgi apparatus. Functionally, required for triggering rhoptry secretion. Plays a role in host cell invasion. The sequence is that of Cysteine repeat modular protein B from Toxoplasma gondii.